We begin with the raw amino-acid sequence, 93 residues long: 3-isopropylmalate dehydratase small subunit (93 aa).

The protein belongs to the LeuD family. LeuD type 1 subfamily. As to quaternary structure, heterodimer of LeuC and LeuD.

The catalysed reaction is (2R,3S)-3-isopropylmalate = (2S)-2-isopropylmalate. Its pathway is amino-acid biosynthesis; L-leucine biosynthesis; L-leucine from 3-methyl-2-oxobutanoate: step 2/4. Functionally, catalyzes the isomerization between 2-isopropylmalate and 3-isopropylmalate, via the formation of 2-isopropylmaleate. This chain is 3-isopropylmalate dehydratase small subunit (leuD), found in Actinoplanes teichomyceticus.